We begin with the raw amino-acid sequence, 108 residues long: MAKNIGLNVAVPEKDCDDVNCPFHGSLPVRGQVITGKVVSERMQGTVVVERNFLHKVQKYDRYEKRSSKIHAHMAPCLNAKIGDEVKIAECRPLNKTTSYVVVEVIKE.

It belongs to the universal ribosomal protein uS17 family. As to quaternary structure, part of the 30S ribosomal subunit.

In terms of biological role, one of the primary rRNA binding proteins, it binds specifically to the 5'-end of 16S ribosomal RNA. The sequence is that of Small ribosomal subunit protein uS17 from Methanocorpusculum labreanum (strain ATCC 43576 / DSM 4855 / Z).